Consider the following 320-residue polypeptide: MATYCDEPVDSYFYSSYNPYMGRYPRHRDAGWKYKSYLSHYGDTSEAFSNQQRAQLKSILSQINPKLTPRLRKANTKDVAVQVNPKRDASVQCSIGPRTLLVVKRELRRRRKLNPGPPGTPQKTEGEVRYPRTLAVYSPIAFRSVTSFLVETGKDRPAAEAQAEELPGEQPEQKGGENQAGEETNANLPEQRKPQSEDAQTAADAEGSKGKARVRFQFLEQKYGYYHCRECNLRWESAYVWCVQGTNKVYFKQFCRKCQKDFNPYRVEDITCHVCNKARCACAETQRHVDPKRPHRQDLCGRCKGKRLSCDSTFSFKYIV.

2 disordered regions span residues 106 to 130 and 155 to 208; these read ELRRRRKLNPGPPGTPQKTEGEVRY and DRPA…AEGS. The 3CxxC-type zinc finger occupies 222–305; the sequence is KYGYYHCREC…RQDLCGRCKG (84 aa).

Belongs to the ZAR1 family.

It is found in the cytoplasm. Its subcellular location is the cytoplasmic ribonucleoprotein granule. MRNA-binding protein required for maternal mRNA storage, translation and degradation during oocyte maturation. Probably promotes formation of some phase-separated membraneless compartment that stores maternal mRNAs in oocytes: acts by undergoing liquid-liquid phase separation upon binding to maternal mRNAs. Binds to the 3'-UTR of maternal mRNAs, inhibiting their translation. The polypeptide is Zygote arrest protein 1 (Takifugu rubripes (Japanese pufferfish)).